Reading from the N-terminus, the 515-residue chain is Histidine ammonia-lyase (515 aa).

The 5-imidazolinone (Ala-Gly) cross-link spans 145-147; sequence ASG. 2,3-didehydroalanine (Ser) is present on S146.

The protein belongs to the PAL/histidase family. In terms of processing, contains an active site 4-methylidene-imidazol-5-one (MIO), which is formed autocatalytically by cyclization and dehydration of residues Ala-Ser-Gly.

It is found in the cytoplasm. The catalysed reaction is L-histidine = trans-urocanate + NH4(+). The protein operates within amino-acid degradation; L-histidine degradation into L-glutamate; N-formimidoyl-L-glutamate from L-histidine: step 1/3. The chain is Histidine ammonia-lyase from Gluconobacter oxydans (strain 621H) (Gluconobacter suboxydans).